A 399-amino-acid polypeptide reads, in one-letter code: Zinc finger HIT domain-containing protein 2 (399 aa).

Methionine 1 bears the N-acetylmethionine mark. Positions 7, 10, 22, 25, 30, 34, 38, and 41 each coordinate Zn(2+). The HIT-type zinc finger occupies 7-41 (CGFCPAGEALPARYTCPRCNAPYCSLRCYRAHGAC). 2 disordered regions span residues 70–97 (RLREQREAEDEPEEAGLGPGARPGGLSG) and 152–175 (AEPEPAPARTALQSGDDAAAAEPF). Residues 86-96 (LGPGARPGGLS) are compositionally biased toward gly residues. Residue threonine 161 is modified to Phosphothreonine.

In terms of assembly, interacts (via HIT-type zinc finger) with RUVBL2 in the presence of ATP or ADP; shows a stronger interaction in the presence of ADP. In terms of tissue distribution, low expression in most tissues; highly expressed in testis; particularly in seminiferous tubules.

Its function is as follows. May act as a bridging factor mediating the interaction between the R2TP/Prefoldin-like (R2TP/PFDL) complex and U5 small nuclear ribonucleoprotein (U5 snRNP). Required for the interaction of R2TP complex subunit RPAP3 and prefoldin-like subunit URI1 with U5 snRNP proteins EFTUD2 and PRPF8. May play a role in regulating the composition of the U5 snRNP complex. The polypeptide is Zinc finger HIT domain-containing protein 2 (Znhit2) (Mus musculus (Mouse)).